We begin with the raw amino-acid sequence, 211 residues long: MSGTLVLVRHGQSDWNLKNLFTGWRDPDLTELGIEEAKAGGKALADYGIKFDIAFTSVLIRAQRTCQLVLDAVGQSSLETIRDQALNERDYGDLSGLNKDDARAKWGEEQVHIWRRSYDVPPPGGESLRDTGARVWPYYLTDILPRVLSGEKVLVAAHGNSLRSLVMVLDKLTKEQILKLNLATGVPMVYKLNADSTVASKEVLGDMSGAH.

Substrate contacts are provided by residues 9–16 (RHGQSDWN), 22–23 (TG), Arg61, 88–91 (ERDY), Lys99, 115–116 (RR), and 159–160 (GN). Residue His10 is the Tele-phosphohistidine intermediate of the active site. Glu88 functions as the Proton donor/acceptor in the catalytic mechanism.

Belongs to the phosphoglycerate mutase family. BPG-dependent PGAM subfamily. Homodimer.

It catalyses the reaction (2R)-2-phosphoglycerate = (2R)-3-phosphoglycerate. It functions in the pathway carbohydrate degradation; glycolysis; pyruvate from D-glyceraldehyde 3-phosphate: step 3/5. In terms of biological role, catalyzes the interconversion of 2-phosphoglycerate and 3-phosphoglycerate. The protein is 2,3-bisphosphoglycerate-dependent phosphoglycerate mutase of Rhizobium meliloti (strain 1021) (Ensifer meliloti).